Reading from the N-terminus, the 147-residue chain is Small ribosomal subunit protein uS12 (147 aa).

It belongs to the universal ribosomal protein uS12 family. Part of the 30S ribosomal subunit.

Its function is as follows. With S4 and S5 plays an important role in translational accuracy. Located at the interface of the 30S and 50S subunits. This Thermofilum pendens (strain DSM 2475 / Hrk 5) protein is Small ribosomal subunit protein uS12.